The following is a 364-amino-acid chain: UDP-N-acetylglucosamine--N-acetylmuramyl-(pentapeptide) pyrophosphoryl-undecaprenol N-acetylglucosamine transferase 1 (364 aa).

UDP-N-acetyl-alpha-D-glucosamine contacts are provided by residues 10 to 12, N124, S195, I250, and Q295; that span reads TGG.

This sequence belongs to the glycosyltransferase 28 family. MurG subfamily.

The protein localises to the cell membrane. It carries out the reaction di-trans,octa-cis-undecaprenyl diphospho-N-acetyl-alpha-D-muramoyl-L-alanyl-D-glutamyl-meso-2,6-diaminopimeloyl-D-alanyl-D-alanine + UDP-N-acetyl-alpha-D-glucosamine = di-trans,octa-cis-undecaprenyl diphospho-[N-acetyl-alpha-D-glucosaminyl-(1-&gt;4)]-N-acetyl-alpha-D-muramoyl-L-alanyl-D-glutamyl-meso-2,6-diaminopimeloyl-D-alanyl-D-alanine + UDP + H(+). Its pathway is cell wall biogenesis; peptidoglycan biosynthesis. In terms of biological role, cell wall formation. Catalyzes the transfer of a GlcNAc subunit on undecaprenyl-pyrophosphoryl-MurNAc-pentapeptide (lipid intermediate I) to form undecaprenyl-pyrophosphoryl-MurNAc-(pentapeptide)GlcNAc (lipid intermediate II). This Bacillus cereus (strain ATCC 10987 / NRS 248) protein is UDP-N-acetylglucosamine--N-acetylmuramyl-(pentapeptide) pyrophosphoryl-undecaprenol N-acetylglucosamine transferase 1.